A 255-amino-acid polypeptide reads, in one-letter code: MNINKIALIYNHNSKHLAIIEEIKKLYNYCKIEEAEVIIVIGGDGELLHNIHRYMHLNIPFYGVNLGSLGFLMNPLDTKKLLQNIHESTVSILNPLLMQVEDTSGQIYTALAINEVSIFRKTNQAAKFRIEVNGIERMSELVADGALVATPAGSSAYNLSASGPILPLESNMLCLTPICSFRPRRWHGALLLASATIKFEILNTNKRPVNATADFQEFNNITNVTVKSTKDKPVKLLFNKNHTLEDRIIKEQFGG.

Residue aspartate 44 is the Proton acceptor of the active site. NAD(+)-binding positions include 44–45 (DG), histidine 49, 114–115 (NE), aspartate 144, alanine 152, 155–160 (SAYNLS), and glutamine 216.

It belongs to the NAD kinase family. It depends on a divalent metal cation as a cofactor.

It localises to the cytoplasm. It carries out the reaction NAD(+) + ATP = ADP + NADP(+) + H(+). Involved in the regulation of the intracellular balance of NAD and NADP, and is a key enzyme in the biosynthesis of NADP. Catalyzes specifically the phosphorylation on 2'-hydroxyl of the adenosine moiety of NAD to yield NADP. This chain is NAD kinase, found in Rickettsia conorii (strain ATCC VR-613 / Malish 7).